A 744-amino-acid chain; its full sequence is MRFRSERQSKILSASNGEAGEVHKASLKAAQATFKKHADGARVNPRVPSAPGNSKGSMDGLVDPIAGLQLDVSGRRSKRGLVGRSLPPGGSANNINPRRISSGVSCGEYDYKVAAAAAARAARNENESIWPPTNAQHASPLLALPPLKLAGTHTRSSSNISMSTLTSGNGSHLSLDEIIATIKVNDPNSQISLKPPTSRRSTQTGAYLSSRESPRGGVDNSTESLPAGGSQYSPGRLHIPPIVINPALLGKDSQAILACSESQASPSHCSETTSPPPNTDGPVLPVRPPAVSSPIQSTYSFRSFSSNRMPRRIPPPCDPLSQLTKNEQKAVPQAAPLLESSEYSGGDSDYDGKQYSKACISETDSALEDDDDFGSGYENFSNAEDYLSSQDDFRERNDNNDNDDDDELDDDNLVESENDATMEQDSQSDDDTESAKEFTVANVSYSTLNKIPMNMTYRGTLPDLIPNYQRKQSKWMKLFKRHGQTGLGPSKNHPPTSHIYTQNDNALVQSKLHVRLKTTMRGILNDSSSSEPHQLSDDSEDSEEDYGSDRNSRSRSPGRRSGKKREKIRQNLRYRNSFNEDKPWKSHLDVGYVTERERKRYEGMWVSNRDTYLDLLPWWNNGNYDETREVPEDGLMLNLVVTDIWSRSNLPQDTLAQIYDMVDTRRDGTLDRNSFVVGMWLVDQSLYGRKLPRELDRRVWDSVDKYVINVNGSNKNPKHHHRTRKKLLKKELKLIKKESKSHNV.

7 disordered regions span residues 1–61, 76–98, 187–237, 260–282, 302–350, 366–412, and 522–574; these read MRFR…MDGL, RSKR…INPR, PNSQ…PGRL, SESQ…TDGP, RSFS…DSDY, ALED…DDDN, and GILN…NLRY. Composition is skewed to polar residues over residues 198–211 and 260–273; these read SRRS…LSSR and SESQ…SETT. Positions 378–390 are enriched in polar residues; that stretch reads ENFSNAEDYLSSQ. 2 stretches are compositionally biased toward acidic residues: residues 400-412 and 537-546; these read NDND…DDDN and DDSEDSEEDY. Positions 556–572 are enriched in basic residues; the sequence is SPGRRSGKKREKIRQNL. Positions 617-706 constitute an EH domain; it reads PWWNNGNYDE…RRVWDSVDKY (90 aa).

This sequence belongs to the IRS4 family.

Functionally, positive regulator of phosphatidylinositol 4,5-bisphosphate turnover and negatively regulates signaling through the cell integrity pathway. Involved in rDNA silencing. The sequence is that of Increased rDNA silencing protein 4 (IRS4) from Eremothecium gossypii (strain ATCC 10895 / CBS 109.51 / FGSC 9923 / NRRL Y-1056) (Yeast).